A 206-amino-acid polypeptide reads, in one-letter code: Large ribosomal subunit protein uL4 (206 aa).

The disordered stretch occupies residues 47-76 (GTQSAKTRAEVSGGGIKPWRQKGTGRARQG).

It belongs to the universal ribosomal protein uL4 family. In terms of assembly, part of the 50S ribosomal subunit.

In terms of biological role, one of the primary rRNA binding proteins, this protein initially binds near the 5'-end of the 23S rRNA. It is important during the early stages of 50S assembly. It makes multiple contacts with different domains of the 23S rRNA in the assembled 50S subunit and ribosome. Forms part of the polypeptide exit tunnel. In Clostridium botulinum (strain Okra / Type B1), this protein is Large ribosomal subunit protein uL4.